A 250-amino-acid chain; its full sequence is 2,3-bisphosphoglycerate-dependent phosphoglycerate mutase (250 aa).

Residues 10 to 17, 23 to 24, R62, 89 to 92, K100, 116 to 117, and 185 to 186 each bind substrate; these read RHGESQWN, TG, ERHY, RR, and GN. H11 acts as the Tele-phosphohistidine intermediate in catalysis. E89 functions as the Proton donor/acceptor in the catalytic mechanism.

It belongs to the phosphoglycerate mutase family. BPG-dependent PGAM subfamily. Homodimer.

It catalyses the reaction (2R)-2-phosphoglycerate = (2R)-3-phosphoglycerate. It participates in carbohydrate degradation; glycolysis; pyruvate from D-glyceraldehyde 3-phosphate: step 3/5. In terms of biological role, catalyzes the interconversion of 2-phosphoglycerate and 3-phosphoglycerate. This Klebsiella pneumoniae (strain 342) protein is 2,3-bisphosphoglycerate-dependent phosphoglycerate mutase.